The primary structure comprises 101 residues: MGTRFLLALCLVLLVLGFEVQGTQLPKQDEPPSPALLSQVQESLSSYWESAKAAAQKLYEKTYLPAVDEKLRDLYSKSTAAMSTYTGIFTDQVLSVLKGEE.

The signal sequence occupies residues 1 to 17 (MGTRFLLALCLVLLVLG). The interval 66–74 (AVDEKLRDL) is lipid binding. A lipoprotein lipase cofactor region spans residues 78–101 (STAAMSTYTGIFTDQVLSVLKGEE).

Belongs to the apolipoprotein C2 family. In terms of processing, proapolipoprotein C-II is synthesized as a sialic acid containing glycoprotein which is subsequently desialylated prior to its proteolytic processing. Proapolipoprotein C-II, the major form found in plasma undergoes proteolytic cleavage of its N-terminal hexapeptide to generate apolipoprotein C-II, which occurs as the minor form in plasma.

The protein resides in the secreted. In terms of biological role, component of chylomicrons, very low-density lipoproteins (VLDL), low-density lipoproteins (LDL), and high-density lipoproteins (HDL) in plasma. Plays an important role in lipoprotein metabolism as an activator of lipoprotein lipase. Both proapolipoprotein C-II and apolipoprotein C-II can activate lipoprotein lipase. The protein is Apolipoprotein C-II (APOC2) of Chlorocebus sabaeus (Green monkey).